A 176-amino-acid polypeptide reads, in one-letter code: uncharacterized protein (176 aa).

The segment covering 87–100 (ASASSQLRASRVQS) has biased composition (low complexity). Residues 87–109 (ASASSQLRASRVQSGTRQSARAG) form a disordered region.

This is an uncharacterized protein from Homo sapiens (Human).